Reading from the N-terminus, the 292-residue chain is Elongation factor Ts (292 aa).

The involved in Mg(2+) ion dislocation from EF-Tu stretch occupies residues 79 to 82 (TDFV).

Belongs to the EF-Ts family.

It is found in the cytoplasm. Its function is as follows. Associates with the EF-Tu.GDP complex and induces the exchange of GDP to GTP. It remains bound to the aminoacyl-tRNA.EF-Tu.GTP complex up to the GTP hydrolysis stage on the ribosome. The chain is Elongation factor Ts from Malacoplasma penetrans (strain HF-2) (Mycoplasma penetrans).